A 430-amino-acid chain; its full sequence is MQLQSPFGDGISCECLNIRVLGIPNETKHQWIFVPRDLIKIKIYSLLQICKAENCSAVACRGCNLCILAVQGNIEISEEPQKLFQEENVKVYIYDSAISLSSVRASFPISELGIRMDIIKARAEPREDEIRASFSSLVNKEIKRTVEELLLSKRSTNRLSLLAFMRNQQLNYEAYETKLLEDASTIEKSLEKEVKTIYDSNIASPKESSDAIDADHAMIDESRSTQRRKSKPKKHVAFTDEYQVAFSDKPGKYFNQPMQYSKQFKLDNPDYEASSDSLNDIENLSTLTFRSDEELEFDFDTNNINNNKSGDSLEMSTTIPSDEENEDFTSKVDAMEIHSGSLPLNIDSSPIFTNHSPSSSLSSESSFEASPSSFVDRKNRWIQMLKKADEHSRSIQARSMGYVLSDDLDNSKAFRPYKQSFLAQGWKSLN.

S204 and S399 each carry phosphoserine.

In terms of assembly, the target of rapamycin complex 1 (TORC1) is composed of at least mip1, pop3/wat1, tco89, toc1 and tor2.

It is found in the cytoplasm. In terms of biological role, component of TORC1, which regulates multiple cellular processes to control cell growth in response to environmental signals. Tor2 is essential for growth. Nutrient limitation and environmental stress signals cause inactivation of TORC1. Active TORC1 positively controls cell growth and ribosome biogenesis by regulating ribosomal protein gene expression. TORC1 negatively controls G1 cell-cycle arrest, sexual development and amino acid uptake. Represses mating, meiosis and sporulation efficiency by interfering with the functions of the transcription factor ste11 and the meiosis-promoting RNA-binding protein mei2. This chain is Target of rapamycin complex 1 subunit toc1, found in Schizosaccharomyces pombe (strain 972 / ATCC 24843) (Fission yeast).